Here is a 174-residue protein sequence, read N- to C-terminus: Adipose-secreted signaling protein (174 aa).

The residue at position 2 (A2) is an N-acetylalanine. A Phosphothreonine modification is found at T147.

It belongs to the ADISSP family.

The protein resides in the secreted. Adipocyte-secreted protein (adipokine) that acts as a key regulator for white adipose tissue (WAT) thermogenesis and glucose homeostasis at least in part through activation of protein kinase A (PKA). The protein is Adipose-secreted signaling protein of Bos taurus (Bovine).